A 529-amino-acid polypeptide reads, in one-letter code: MGTIIQFLVVSCLLAGAGSLDPAALMQIGVIPTNVRQLMYYTEASSAFIVVKLMPTIDSPISGCNITSISSYNATVTKLLQPIGENLETIRNQLIPTRRRRRFAGVVIGLAALGVATAAQVTAAVALVKANENAAAILNLKNAIQKTNAAVADVVQATQSLGTAVQAVQDHINSVVSPAITAANCKAQDAIIGSILNLYLTELTTIFHNQITNPALSPITIQALRILLGSTLPTVVEKSFNTQISAAELLSSGLLTGQIVGLDLTYMQMVIKIELPTLTVQPATQIIDLATISAFINNQEVMAQLPTRVMVTGSLIQAYPASQCTITPNTVYCRYNDAQVLSDDTMACLQGNLTRCTFSPVVGSFLTRFVLFDGIVYANCRSMLCKCMQPAAVILQPSSSPVTVIDMYKCVSLQLDNLRFTITQLANVTYNSTIKLESSQILSIDPLDISQNLAAVNKSLSDALQHLAQSDTYLSAITSATTTSVLSIIAICLGSLGLILIILLSVVVWKLLTIVVANRNRMENFVYHK.

A signal peptide spans 1–19 (MGTIIQFLVVSCLLAGAGS). Over 20 to 487 (LDPAALMQIG…TSATTTSVLS (468 aa)) the chain is Extracellular. Disulfide bonds link C64-C185, C324-C333, C348-C356, C380-C385, and C387-C410. Residues N65 and N73 are each glycosylated (N-linked (GlcNAc...) asparagine; by host). The tract at residues 103–127 (FAGVVIGLAALGVATAAQVTAAVAL) is fusion peptide. Residues 128-156 (VKANENAAAILNLKNAIQKTNAAVADVVQ) adopt a coiled-coil conformation. An N-linked (GlcNAc...) asparagine; by host glycan is attached at N352. 3 N-linked (GlcNAc...) asparagine; by host glycosylation sites follow: N427, N431, and N457. A coiled-coil region spans residues 452 to 477 (NLAAVNKSLSDALQHLAQSDTYLSAI). Residues 488–508 (IIAICLGSLGLILIILLSVVV) traverse the membrane as a helical segment. Over 509–529 (WKLLTIVVANRNRMENFVYHK) the chain is Cytoplasmic.

It belongs to the paramyxoviruses fusion glycoprotein family. In terms of assembly, homotrimer of disulfide-linked F1-F2. The inactive precursor F0 is glycosylated and proteolytically cleaved into F1 and F2 to be functionally active. The cleavage is mediated by cellular proteases during the transport and maturation of the polypeptide.

Its subcellular location is the virion membrane. The protein localises to the host cell membrane. Functionally, class I viral fusion protein. Under the current model, the protein has at least 3 conformational states: pre-fusion native state, pre-hairpin intermediate state, and post-fusion hairpin state. During viral and plasma cell membrane fusion, the heptad repeat (HR) regions assume a trimer-of-hairpins structure, positioning the fusion peptide in close proximity to the C-terminal region of the ectodomain. The formation of this structure appears to drive apposition and subsequent fusion of viral and plasma cell membranes. Directs fusion of viral and cellular membranes leading to delivery of the nucleocapsid into the cytoplasm. This fusion is pH independent and occurs directly at the outer cell membrane. The trimer of F1-F2 (F protein) probably interacts with HN at the virion surface. Upon HN binding to its cellular receptor, the hydrophobic fusion peptide is unmasked and interacts with the cellular membrane, inducing the fusion between cell and virion membranes. Later in infection, F proteins expressed at the plasma membrane of infected cells could mediate fusion with adjacent cells to form syncytia, a cytopathic effect that could lead to tissue necrosis. This is Fusion glycoprotein F0 (F) from Parainfluenza virus 5 (strain W3) (PIV5).